The primary structure comprises 373 residues: 4-hydroxy-3-methylbut-2-en-1-yl diphosphate synthase (flavodoxin) (373 aa).

[4Fe-4S] cluster is bound by residues cysteine 270, cysteine 273, cysteine 305, and glutamate 312.

It belongs to the IspG family. [4Fe-4S] cluster serves as cofactor.

The catalysed reaction is (2E)-4-hydroxy-3-methylbut-2-enyl diphosphate + oxidized [flavodoxin] + H2O + 2 H(+) = 2-C-methyl-D-erythritol 2,4-cyclic diphosphate + reduced [flavodoxin]. Its pathway is isoprenoid biosynthesis; isopentenyl diphosphate biosynthesis via DXP pathway; isopentenyl diphosphate from 1-deoxy-D-xylulose 5-phosphate: step 5/6. Functionally, converts 2C-methyl-D-erythritol 2,4-cyclodiphosphate (ME-2,4cPP) into 1-hydroxy-2-methyl-2-(E)-butenyl 4-diphosphate. The polypeptide is 4-hydroxy-3-methylbut-2-en-1-yl diphosphate synthase (flavodoxin) (Klebsiella pneumoniae subsp. pneumoniae (strain ATCC 700721 / MGH 78578)).